The primary structure comprises 197 residues: Double homeobox protein 5 (197 aa).

2 DNA-binding regions (homeobox) span residues 46-105 and 121-180; these read GRRM…LRQH and GRRK…RGQS. Positions 101–127 are disordered; it reads QLRQHRRQSRPWPGRRDPQKGRRKRTA.

Belongs to the paired homeobox family. As to expression, expressed in hepatoma Hep3B cells.

It is found in the nucleus. The polypeptide is Double homeobox protein 5 (DUX5) (Homo sapiens (Human)).